The following is a 187-amino-acid chain: Crossover junction endodeoxyribonuclease RuvC (187 aa).

Catalysis depends on residues aspartate 7, glutamate 67, and aspartate 140. Mg(2+) is bound by residues aspartate 7, glutamate 67, and aspartate 140.

This sequence belongs to the RuvC family. Homodimer which binds Holliday junction (HJ) DNA. The HJ becomes 2-fold symmetrical on binding to RuvC with unstacked arms; it has a different conformation from HJ DNA in complex with RuvA. In the full resolvosome a probable DNA-RuvA(4)-RuvB(12)-RuvC(2) complex forms which resolves the HJ. Mg(2+) is required as a cofactor.

The protein resides in the cytoplasm. It catalyses the reaction Endonucleolytic cleavage at a junction such as a reciprocal single-stranded crossover between two homologous DNA duplexes (Holliday junction).. The RuvA-RuvB-RuvC complex processes Holliday junction (HJ) DNA during genetic recombination and DNA repair. Endonuclease that resolves HJ intermediates. Cleaves cruciform DNA by making single-stranded nicks across the HJ at symmetrical positions within the homologous arms, yielding a 5'-phosphate and a 3'-hydroxyl group; requires a central core of homology in the junction. The consensus cleavage sequence is 5'-(A/T)TT(C/G)-3'. Cleavage occurs on the 3'-side of the TT dinucleotide at the point of strand exchange. HJ branch migration catalyzed by RuvA-RuvB allows RuvC to scan DNA until it finds its consensus sequence, where it cleaves and resolves the cruciform DNA. The polypeptide is Crossover junction endodeoxyribonuclease RuvC (Chlorobaculum parvum (strain DSM 263 / NCIMB 8327) (Chlorobium vibrioforme subsp. thiosulfatophilum)).